Reading from the N-terminus, the 238-residue chain is Flagellar L-ring protein (238 aa).

The first 16 residues, 1 to 16, serve as a signal peptide directing secretion; it reads MRKLILISLCIFFLAS. Residue Cys-17 is the site of N-palmitoyl cysteine attachment. A lipid anchor (S-diacylglycerol cysteine) is attached at Cys-17.

Belongs to the FlgH family. In terms of assembly, the basal body constitutes a major portion of the flagellar organelle and consists of four rings (L,P,S, and M) mounted on a central rod.

The protein localises to the cell outer membrane. It is found in the bacterial flagellum basal body. Functionally, assembles around the rod to form the L-ring and probably protects the motor/basal body from shearing forces during rotation. The chain is Flagellar L-ring protein from Thermodesulfovibrio yellowstonii (strain ATCC 51303 / DSM 11347 / YP87).